We begin with the raw amino-acid sequence, 320 residues long: Protein MRH1 (320 aa).

Over 1 to 34 the chain is Extracellular; sequence MSTFETLIKRGGNEAIKINPPTGADFHITSRGSD. A helical transmembrane segment spans residues 35-55; that stretch reads WFWTCFCCYLLFGLILTFLMF. The Cytoplasmic segment spans residues 56–62; it reads RKPVNDR. The helical transmembrane segment at 63-83 threads the bilayer; it reads FFYLTGIAPNFFMCIAYFTMA. The Extracellular segment spans residues 84-116; the sequence is SNLGWIPVKAKYNHVQTSTQKEHPGYRQIFYSR. Residues 117–137 form a helical membrane-spanning segment; sequence FVGWFLALPWPIIQICMLAGT. At 138–141 the chain is on the cytoplasmic side; it reads PFWQ. A helical transmembrane segment spans residues 142-162; it reads MAFNVCITEFFTVCWLIAACV. At 163-167 the chain is on the extracellular side; the sequence is HSTYK. Residues 168-188 traverse the membrane as a helical segment; the sequence is WGYYTIGLGAAIVVSISVMTT. The Cytoplasmic portion of the chain corresponds to 189-204; that stretch reads SYNLVKQRDNDIRLTF. A helical transmembrane segment spans residues 205-225; sequence LVFFSIIMFLWIIAYPTCFGI. Topologically, residues 226-238 are extracellular; sequence TDGGNVLQPDSAG. The helical transmembrane segment at 239 to 259 threads the bilayer; the sequence is IFYGIIDLILMCFIPTLLVPI. The Cytoplasmic segment spans residues 260–320; that stretch reads ANHFGADKLG…KSKKSKKSEE (61 aa). The interval 285 to 320 is disordered; that stretch reads APVASPRPAATPNLSKDKKKKSKKSKKSKKSKKSEE. S289 carries the phosphoserine modification. The residue at position 295 (T295) is a Phosphothreonine. At S299 the chain carries Phosphoserine. A compositionally biased stretch (basic residues) spans 301-320; it reads DKKKKSKKSKKSKKSKKSEE.

This sequence belongs to the archaeal/bacterial/fungal opsin family.

It is found in the cell membrane. The protein resides in the mitochondrion. The protein localises to the bud. This is Protein MRH1 (MRH1) from Saccharomyces cerevisiae (strain ATCC 204508 / S288c) (Baker's yeast).